The sequence spans 81 residues: MNDAFSTAQHRLDALGLRCPEPVMMVRKTVRQMAAGETLLIIADDPATTRDIPSFCEFMDHTLIASETTQTPYQYLIKKGL.

The active-site Cysteine persulfide intermediate is Cys19.

Belongs to the sulfur carrier protein TusA family.

It localises to the cytoplasm. Sulfur carrier protein which probably makes part of a sulfur-relay system. This chain is Sulfur carrier protein TusA, found in Shewanella baltica (strain OS223).